A 310-amino-acid polypeptide reads, in one-letter code: MSKPIEIEIRRAPVLGSSMAYRETGAQDAPVVLFLHGNPTSSHIWRNILPLVSPVAHCIAPDLIGFGQSGKPDIAYRFFDHVRYLDAFIEQRGVTSAYLVAQDWGTALAFHLAARRPDFVRGLAFMEFIRPMPTWQDFHHTEVAEEQDHAEAARAVFRKFRTPGEGEAMILEANAFVERVLPGGIVRKLGDEEMAPYRTPFPTPESRRPVLAFPRELPIAGEPADVYEALQSAHAALAASSYPKLLFTGEPGALVSPEFAERFAASLTRCALIRLGAGLHYLQEDHADAIGRSVAGWIAGIEAVRPQLAA.

The AB hydrolase-1 domain occupies 30–140; the sequence is PVVLFLHGNP…PMPTWQDFHH (111 aa). The active-site Nucleophile is D103. E127 functions as the Proton donor in the catalytic mechanism. Catalysis depends on H280, which acts as the Proton acceptor.

Belongs to the haloalkane dehalogenase family. Type 2 subfamily. Monomer.

The catalysed reaction is 1-haloalkane + H2O = a halide anion + a primary alcohol + H(+). Catalyzes hydrolytic cleavage of carbon-halogen bonds in halogenated aliphatic compounds, leading to the formation of the corresponding primary alcohols, halide ions and protons. The protein is Haloalkane dehalogenase of Bradyrhizobium diazoefficiens (strain JCM 10833 / BCRC 13528 / IAM 13628 / NBRC 14792 / USDA 110).